We begin with the raw amino-acid sequence, 146 residues long: 3-dehydroquinate dehydratase (146 aa).

The Proton acceptor role is filled by Tyr-23. The substrate site is built by Asn-74, His-80, and Asp-87. His-100 (proton donor) is an active-site residue. Residues 101–102 and Arg-111 contribute to the substrate site; that span reads IS.

This sequence belongs to the type-II 3-dehydroquinase family. Homododecamer.

The catalysed reaction is 3-dehydroquinate = 3-dehydroshikimate + H2O. It participates in metabolic intermediate biosynthesis; chorismate biosynthesis; chorismate from D-erythrose 4-phosphate and phosphoenolpyruvate: step 3/7. Catalyzes a trans-dehydration via an enolate intermediate. This is 3-dehydroquinate dehydratase from Bacillus cereus (strain ATCC 10987 / NRS 248).